A 333-amino-acid chain; its full sequence is Probable pyridoxal reductase 2 (333 aa).

Tyr-52 functions as the Proton donor in the catalytic mechanism.

Belongs to the aldo/keto reductase family.

The protein localises to the cytoplasm. It catalyses the reaction pyridoxine + NADP(+) = pyridoxal + NADPH + H(+). In terms of biological role, catalyzes the reduction of pyridoxal (PL) with NADPH and oxidation of pyridoxine (PN) with NADP(+). The sequence is that of Probable pyridoxal reductase 2 from Schizosaccharomyces pombe (strain 972 / ATCC 24843) (Fission yeast).